Reading from the N-terminus, the 448-residue chain is Glucose-6-phosphate isomerase (448 aa).

The active-site Proton donor is glutamate 288. Active-site residues include histidine 309 and lysine 423.

The protein belongs to the GPI family.

The protein resides in the cytoplasm. The catalysed reaction is alpha-D-glucose 6-phosphate = beta-D-fructose 6-phosphate. The protein operates within carbohydrate biosynthesis; gluconeogenesis. It functions in the pathway carbohydrate degradation; glycolysis; D-glyceraldehyde 3-phosphate and glycerone phosphate from D-glucose: step 2/4. Its function is as follows. Catalyzes the reversible isomerization of glucose-6-phosphate to fructose-6-phosphate. The protein is Glucose-6-phosphate isomerase of Fusobacterium nucleatum subsp. nucleatum (strain ATCC 25586 / DSM 15643 / BCRC 10681 / CIP 101130 / JCM 8532 / KCTC 2640 / LMG 13131 / VPI 4355).